We begin with the raw amino-acid sequence, 336 residues long: UPF0324 membrane protein lp_2841 (336 aa).

9 helical membrane-spanning segments follow: residues 5–22 (GILP…ISQG), 26–48 (FVPA…NTFL), 84–106 (IGGF…ALWL), 116–138 (VRML…IAPV), 150–172 (ITLV…MAVF), 204–226 (TVQF…VLIF), 255–277 (WYVA…AIIG), 282–304 (TISS…LVNF), and 311–333 (LALY…ITLL).

It belongs to the UPF0324 family.

The protein resides in the cell membrane. The chain is UPF0324 membrane protein lp_2841 from Lactiplantibacillus plantarum (strain ATCC BAA-793 / NCIMB 8826 / WCFS1) (Lactobacillus plantarum).